We begin with the raw amino-acid sequence, 440 residues long: Thymidine phosphorylase (440 aa).

Belongs to the thymidine/pyrimidine-nucleoside phosphorylase family. In terms of assembly, homodimer.

The enzyme catalyses thymidine + phosphate = 2-deoxy-alpha-D-ribose 1-phosphate + thymine. The protein operates within pyrimidine metabolism; dTMP biosynthesis via salvage pathway; dTMP from thymine: step 1/2. In terms of biological role, the enzymes which catalyze the reversible phosphorolysis of pyrimidine nucleosides are involved in the degradation of these compounds and in their utilization as carbon and energy sources, or in the rescue of pyrimidine bases for nucleotide synthesis. This Salmonella heidelberg (strain SL476) protein is Thymidine phosphorylase.